Consider the following 285-residue polypeptide: Bifunctional protein FolD (285 aa).

NADP(+)-binding positions include 166–168 (GAS) and I232.

It belongs to the tetrahydrofolate dehydrogenase/cyclohydrolase family. As to quaternary structure, homodimer.

The catalysed reaction is (6R)-5,10-methylene-5,6,7,8-tetrahydrofolate + NADP(+) = (6R)-5,10-methenyltetrahydrofolate + NADPH. It catalyses the reaction (6R)-5,10-methenyltetrahydrofolate + H2O = (6R)-10-formyltetrahydrofolate + H(+). The protein operates within one-carbon metabolism; tetrahydrofolate interconversion. Its function is as follows. Catalyzes the oxidation of 5,10-methylenetetrahydrofolate to 5,10-methenyltetrahydrofolate and then the hydrolysis of 5,10-methenyltetrahydrofolate to 10-formyltetrahydrofolate. The protein is Bifunctional protein FolD of Buchnera aphidicola subsp. Schizaphis graminum (strain Sg).